A 501-amino-acid polypeptide reads, in one-letter code: MSERCRCKYSSGASIDYMPTSTQAKMVSKRIAQETFDAAVRENIEEFAMGPDEAVKEAVEQFESQGVDLSNIVKTAPKVSADGSQEPTHDILQTLSDLQESVASSRPQEVSAYLTRFCDQCKQDKACRFLAAQKGAYPIIFTAWKLATAGDQGLLLQSLNALSVLTDGQPDLLDTQGLQLLVATLTRNADEADLTCSGIRCVRHACLKHEQNRQDLVKAGVLPLLTGAITHHGHHADVVREACCALRVMTFDDDIRVPFGHAHNHAKMIVQENKGLKVLIEATKAFLDNPGILSELCGTLSRLAIRNEFCQEVVDLGGLSILVSLLADCNDHQMGDQSSVQELVKQVLSILRAIAGNDDVKDAIVRAGGTESIVAAMTQHLTSPQVCEQSCAALCFLALRKPDNSRIIVEGGGAVAALQAMKAHPQKAGVQKQACMLIRNLVAHSQAFSKPILDLGAEALIMQARSAHRDCEDVAKAALRDLGCHVELRELWTGQRGNLAP.

S64 carries the post-translational modification Phosphoserine. ARM repeat units lie at residues 220–264 (GVLP…HAHN), 274–318 (KGLK…DLGG), 319–369 (LSIL…RAGG), and 370–412 (TESI…VEGG). At H263 the chain carries Pros-methylhistidine.

The protein belongs to the ARMC6 family. Methylated at His-263 by METTL9.

This is Armadillo repeat-containing protein 6 (ARMC6) from Pongo abelii (Sumatran orangutan).